A 310-amino-acid chain; its full sequence is Tagatose-6-phosphate kinase (310 aa).

This sequence belongs to the carbohydrate kinase PfkB family. LacC subfamily.

The enzyme catalyses D-tagatofuranose 6-phosphate + ATP = D-tagatofuranose 1,6-bisphosphate + ADP + H(+). It participates in carbohydrate metabolism; D-tagatose 6-phosphate degradation; D-glyceraldehyde 3-phosphate and glycerone phosphate from D-tagatose 6-phosphate: step 1/2. This chain is Tagatose-6-phosphate kinase, found in Streptococcus uberis (strain ATCC BAA-854 / 0140J).